A 160-amino-acid chain; its full sequence is Ribosomal RNA large subunit methyltransferase H (160 aa).

S-adenosyl-L-methionine is bound at residue Gly108.

The protein belongs to the RNA methyltransferase RlmH family. Homodimer.

It is found in the cytoplasm. The catalysed reaction is pseudouridine(1915) in 23S rRNA + S-adenosyl-L-methionine = N(3)-methylpseudouridine(1915) in 23S rRNA + S-adenosyl-L-homocysteine + H(+). In terms of biological role, specifically methylates the pseudouridine at position 1915 (m3Psi1915) in 23S rRNA. The protein is Ribosomal RNA large subunit methyltransferase H of Rhodopseudomonas palustris (strain BisA53).